The primary structure comprises 289 residues: SNF1-related protein kinase regulatory subunit beta-2 (289 aa).

Residues 1–10 are compositionally biased toward basic and acidic residues; it reads MGNVNAREEA. The disordered stretch occupies residues 1-59; the sequence is MGNVNAREEANSNNASAVEDEDAEICSREAMSAASDGNHVAPPELMGQSPPHSPRATQS. The N-myristoyl glycine moiety is linked to residue glycine 2. The kinase-interacting sequence (KIS) stretch occupies residues 103–180; that stretch reads PTMITWCHGG…AGNTFNILDL (78 aa). The interval 217–289 is association with SNF1 complex (ASC); it reads EPPVVPPHLQ…TVVLYKSLQR (73 aa).

The protein belongs to the 5'-AMP-activated protein kinase beta subunit family. As to quaternary structure, subunit of a probable heterotrimeric complex consisting of an alpha catalytic (KIN10 or KIN11) subunit, and a beta (KINB) and a gamma (KING or SNF4) non-catalytic regulatory subunits. Interacts with SNF4. Interacts with FLZ1, FLZ2, FLZ8, FLZ9, FLZ10, FLZ12, FLZ13 and FLZ14. Post-translationally, sumoylated. In terms of tissue distribution, expressed in leaves, stems, roots, flower buds and flowers. Not detectable in siliques.

The protein localises to the cell membrane. Functionally, regulatory subunit of the probable trimeric SNF1-related protein kinase (SnRK) complex, which may play a role in a signal transduction cascade regulating gene expression and carbohydrate metabolism in higher plants. The SnRK complex may also be involved in the regulation of fatty acid synthesis by phosphorylation of acetyl-CoA carboxylase and in assimilation of nitrogen by phosphorylating nitrate reductase. In Arabidopsis thaliana (Mouse-ear cress), this protein is SNF1-related protein kinase regulatory subunit beta-2 (KINB2).